Here is a 201-residue protein sequence, read N- to C-terminus: dCTP deaminase, dUMP-forming (201 aa).

Residues 101–106 (KSSLGR), aspartate 119, 127–129 (TLE), glutamine 148, tyrosine 162, and glutamine 174 each bind dCTP. The Proton donor/acceptor role is filled by glutamate 129. The span at 166 to 183 (EYSSRYQGQRGPTASRSF) shows a compositional bias: polar residues. The interval 166-201 (EYSSRYQGQRGPTASRSFLNFHRTDVSGTEAGRSSS) is disordered.

Belongs to the dCTP deaminase family. In terms of assembly, homotrimer.

The catalysed reaction is dCTP + 2 H2O = dUMP + NH4(+) + diphosphate. Its pathway is pyrimidine metabolism; dUMP biosynthesis; dUMP from dCTP: step 1/1. In terms of biological role, bifunctional enzyme that catalyzes both the deamination of dCTP to dUTP and the hydrolysis of dUTP to dUMP without releasing the toxic dUTP intermediate. This Leifsonia xyli subsp. xyli (strain CTCB07) protein is dCTP deaminase, dUMP-forming.